The primary structure comprises 337 residues: Phosphate acyltransferase (337 aa).

The protein belongs to the PlsX family. In terms of assembly, homodimer. Probably interacts with PlsY.

It localises to the cytoplasm. The enzyme catalyses a fatty acyl-[ACP] + phosphate = an acyl phosphate + holo-[ACP]. Its pathway is lipid metabolism; phospholipid metabolism. In terms of biological role, catalyzes the reversible formation of acyl-phosphate (acyl-PO(4)) from acyl-[acyl-carrier-protein] (acyl-ACP). This enzyme utilizes acyl-ACP as fatty acyl donor, but not acyl-CoA. The chain is Phosphate acyltransferase from Ehrlichia canis (strain Jake).